The chain runs to 350 residues: 2,5-dihydroxypyridine 5,6-dioxygenase (350 aa).

His265, His318, and Asp320 together coordinate Fe cation.

It depends on Fe(2+) as a cofactor.

The enzyme catalyses 2,5-dihydroxypyridine + O2 = N-formylmaleamate + H(+). The protein operates within cofactor degradation; nicotinate degradation. Its function is as follows. Catalyzes the dioxygenolytic ring cleavage of 2,5-dihydroxypyridine between carbons 5 and 6 generating N-formylmaleamate in the aerobic nicotinate degradation pathway. The sequence is that of 2,5-dihydroxypyridine 5,6-dioxygenase (nicX) from Pseudomonas putida (strain ATCC 47054 / DSM 6125 / CFBP 8728 / NCIMB 11950 / KT2440).